A 372-amino-acid polypeptide reads, in one-letter code: 4-hydroxy-3-methylbut-2-en-1-yl diphosphate synthase (flavodoxin) (372 aa).

Positions 270, 273, 305, and 312 each coordinate [4Fe-4S] cluster.

The protein belongs to the IspG family. It depends on [4Fe-4S] cluster as a cofactor.

The enzyme catalyses (2E)-4-hydroxy-3-methylbut-2-enyl diphosphate + oxidized [flavodoxin] + H2O + 2 H(+) = 2-C-methyl-D-erythritol 2,4-cyclic diphosphate + reduced [flavodoxin]. Its pathway is isoprenoid biosynthesis; isopentenyl diphosphate biosynthesis via DXP pathway; isopentenyl diphosphate from 1-deoxy-D-xylulose 5-phosphate: step 5/6. Its function is as follows. Converts 2C-methyl-D-erythritol 2,4-cyclodiphosphate (ME-2,4cPP) into 1-hydroxy-2-methyl-2-(E)-butenyl 4-diphosphate. This Idiomarina loihiensis (strain ATCC BAA-735 / DSM 15497 / L2-TR) protein is 4-hydroxy-3-methylbut-2-en-1-yl diphosphate synthase (flavodoxin).